A 628-amino-acid chain; its full sequence is Phosphomethylpyrimidine synthase (628 aa).

Residues Asn229, Met258, Tyr287, His323, 343–345 (SRG), 384–387 (DGLR), and Glu423 each bind substrate. Residue His427 coordinates Zn(2+). A substrate-binding site is contributed by Tyr450. His491 provides a ligand contact to Zn(2+). [4Fe-4S] cluster is bound by residues Cys571, Cys574, and Cys579.

The protein belongs to the ThiC family. In terms of assembly, homodimer. [4Fe-4S] cluster serves as cofactor.

The catalysed reaction is 5-amino-1-(5-phospho-beta-D-ribosyl)imidazole + S-adenosyl-L-methionine = 4-amino-2-methyl-5-(phosphooxymethyl)pyrimidine + CO + 5'-deoxyadenosine + formate + L-methionine + 3 H(+). Its pathway is cofactor biosynthesis; thiamine diphosphate biosynthesis. Its function is as follows. Catalyzes the synthesis of the hydroxymethylpyrimidine phosphate (HMP-P) moiety of thiamine from aminoimidazole ribotide (AIR) in a radical S-adenosyl-L-methionine (SAM)-dependent reaction. The polypeptide is Phosphomethylpyrimidine synthase (Variovorax paradoxus (strain S110)).